A 340-amino-acid polypeptide reads, in one-letter code: Conidiation-specific protein 13 (340 aa).

Residues 313 to 340 are disordered; that stretch reads AEAAAGISSGKPAADRKTKGKKGTKFRV. Basic residues predominate over residues 330–340; the sequence is TKGKKGTKFRV.

The protein is Conidiation-specific protein 13 (con-13) of Neurospora crassa (strain ATCC 24698 / 74-OR23-1A / CBS 708.71 / DSM 1257 / FGSC 987).